The following is a 313-amino-acid chain: Ribosomal RNA small subunit methyltransferase H (313 aa).

Residues 35–37 (GGH), aspartate 55, phenylalanine 79, aspartate 101, and glutamine 108 contribute to the S-adenosyl-L-methionine site.

It belongs to the methyltransferase superfamily. RsmH family.

It is found in the cytoplasm. It catalyses the reaction cytidine(1402) in 16S rRNA + S-adenosyl-L-methionine = N(4)-methylcytidine(1402) in 16S rRNA + S-adenosyl-L-homocysteine + H(+). Specifically methylates the N4 position of cytidine in position 1402 (C1402) of 16S rRNA. This is Ribosomal RNA small subunit methyltransferase H from Escherichia coli O127:H6 (strain E2348/69 / EPEC).